A 398-amino-acid polypeptide reads, in one-letter code: uncharacterized protein (398 aa).

Residues 313–398 (KTIKSSGSKT…TSKSIKYYEV (86 aa)) form a disordered region. 2 stretches are compositionally biased toward low complexity: residues 314 to 333 (TIKSSGSKTSKSIGSKTNKS) and 343 to 398 (GSKT…YYEV).

This is an uncharacterized protein from Acanthamoeba polyphaga mimivirus (APMV).